Here is a 60-residue protein sequence, read N- to C-terminus: Protein translocase subunit SecE (60 aa).

A helical transmembrane segment spans residues 37 to 57 (LLGFALVGGIGYLIHLGYIIL).

It belongs to the SecE/SEC61-gamma family. Component of the Sec protein translocase complex. Heterotrimer consisting of SecY (alpha), SecG (beta) and SecE (gamma) subunits. The heterotrimers can form oligomers, although 1 heterotrimer is thought to be able to translocate proteins. Interacts with the ribosome. May interact with SecDF, and other proteins may be involved.

The protein resides in the cell membrane. Functionally, essential subunit of the Sec protein translocation channel SecYEG. Clamps together the 2 halves of SecY. May contact the channel plug during translocation. This chain is Protein translocase subunit SecE, found in Aeropyrum pernix (strain ATCC 700893 / DSM 11879 / JCM 9820 / NBRC 100138 / K1).